The following is an 82-amino-acid chain: MDSSALGLTCLAAAIGMAIAAAGCGIGQGMGLKAACEGTARNPEAGGKIMVTLILGLAFVESLAIYALVVNLILLFANPFMG.

A run of 2 helical transmembrane segments spans residues 6–26 (LGLT…GCGI) and 49–69 (IMVT…YALV).

Belongs to the ATPase C chain family. F-type ATPases have 2 components, F(1) - the catalytic core - and F(0) - the membrane proton channel. F(1) has five subunits: alpha(3), beta(3), gamma(1), delta(1), epsilon(1). F(0) has three main subunits: a(1), b(2) and c(10-14). The alpha and beta chains form an alternating ring which encloses part of the gamma chain. F(1) is attached to F(0) by a central stalk formed by the gamma and epsilon chains, while a peripheral stalk is formed by the delta and b chains.

It is found in the cell inner membrane. F(1)F(0) ATP synthase produces ATP from ADP in the presence of a proton or sodium gradient. F-type ATPases consist of two structural domains, F(1) containing the extramembraneous catalytic core and F(0) containing the membrane proton channel, linked together by a central stalk and a peripheral stalk. During catalysis, ATP synthesis in the catalytic domain of F(1) is coupled via a rotary mechanism of the central stalk subunits to proton translocation. Its function is as follows. Key component of the F(0) channel; it plays a direct role in translocation across the membrane. A homomeric c-ring of between 10-14 subunits forms the central stalk rotor element with the F(1) delta and epsilon subunits. The chain is ATP synthase subunit c from Nitratidesulfovibrio vulgaris (strain ATCC 29579 / DSM 644 / CCUG 34227 / NCIMB 8303 / VKM B-1760 / Hildenborough) (Desulfovibrio vulgaris).